We begin with the raw amino-acid sequence, 144 residues long: Cathelicidin-4 (144 aa).

The N-terminal stretch at 1–29 is a signal peptide; that stretch reads MQTQRASLSLGRWSLWLLLLGLVVPSASA. Positions 30–130 are excised as a propeptide; sequence QALSYREAVL…DLNCNELQSV (101 aa). Cystine bridges form between Cys85–Cys96 and Cys107–Cys124. Position 143 is an arginine amide (Arg143).

The protein belongs to the cathelicidin family. Elastase might be responsible for its maturation. As to expression, large granules of neutrophils.

Its subcellular location is the secreted. Its function is as follows. Potent microbicidal activity; active against S.aureus and E.coli. This Bos taurus (Bovine) protein is Cathelicidin-4 (CATHL4).